The chain runs to 811 residues: DEAD-box ATP-dependent RNA helicase 48 (811 aa).

2 disordered regions span residues 1-32 and 93-138; these read MGGG…ERGL and DDGP…EPRL. Over residues 15 to 29 the composition is skewed to basic residues; the sequence is WQHKRMHEKLARHKE. 2 stretches are compositionally biased toward basic and acidic residues: residues 95 to 104 and 117 to 138; these read GPIHRADRPR and GDRR…EPRL. Residues 286 to 333 are a coiled coil; sequence RNCDMKKERRALKSYEEENNDLAGSFRELREEIKNREVLGAERRRYES. Positions 342–370 match the Q motif motif; that stretch reads KRFEECGISPLTVKALTDAGYVQTTVVQE. The region spanning 373–556 is the Helicase ATP-binding domain; sequence LPMCLEGKDV…QLVLKRDHVF (184 aa). 386–393 provides a ligand contact to ATP; the sequence is AKTGTGKS. Positions 504–507 match the DEAD box motif; the sequence is DEAD. The Helicase C-terminal domain maps to 570–740; the sequence is KVEQLYLVMP…EMKRKVDGSI (171 aa).

The protein belongs to the DEAD box helicase family.

It catalyses the reaction ATP + H2O = ADP + phosphate + H(+). The chain is DEAD-box ATP-dependent RNA helicase 48 from Oryza sativa subsp. japonica (Rice).